The following is a 53-amino-acid chain: MLHWSLVFLVFALIAAVLGFGGLAGAAVGIAKILFFVFLVIWLVAFLMGRRAI.

2 helical membrane passes run 6–26 (LVFLVFALIAAVLGFGGLAGA) and 28–48 (VGIAKILFFVFLVIWLVAFLM).

This sequence belongs to the UPF0391 family.

Its subcellular location is the cell membrane. The polypeptide is UPF0391 membrane protein Acid_3618 (Solibacter usitatus (strain Ellin6076)).